Consider the following 215-residue polypeptide: 3-isopropylmalate dehydratase small subunit (215 aa).

This sequence belongs to the LeuD family. LeuD type 1 subfamily. As to quaternary structure, heterodimer of LeuC and LeuD.

It carries out the reaction (2R,3S)-3-isopropylmalate = (2S)-2-isopropylmalate. Its pathway is amino-acid biosynthesis; L-leucine biosynthesis; L-leucine from 3-methyl-2-oxobutanoate: step 2/4. Catalyzes the isomerization between 2-isopropylmalate and 3-isopropylmalate, via the formation of 2-isopropylmaleate. This is 3-isopropylmalate dehydratase small subunit from Acinetobacter baumannii (strain AB307-0294).